The chain runs to 172 residues: dCTP deaminase (172 aa).

Residues R97–R102 and D113 contribute to the dCTP site. E123 acts as the Proton donor/acceptor in catalysis. Positions 155 and 162 each coordinate dCTP.

Belongs to the dCTP deaminase family. Homotrimer.

It carries out the reaction dCTP + H2O + H(+) = dUTP + NH4(+). Its pathway is pyrimidine metabolism; dUMP biosynthesis; dUMP from dCTP (dUTP route): step 1/2. In terms of biological role, catalyzes the deamination of dCTP to dUTP. This chain is dCTP deaminase, found in Metallosphaera sedula (strain ATCC 51363 / DSM 5348 / JCM 9185 / NBRC 15509 / TH2).